We begin with the raw amino-acid sequence, 52 residues long: Rubredoxin (52 aa).

Position 1 is an N-formylmethionine; partial (M1). The Rubredoxin-like domain maps to 1–52 (MKKYGCLVCGYVYDPAKGDPDHGIAPGTAFEDLPADWVCPLCGVSKDEFEPL). Fe cation is bound by residues C6, C9, C39, and C42.

This sequence belongs to the rubredoxin family. Fe(3+) is required as a cofactor. Post-translationally, observed in four forms, with and without iron, and with and without formylation at Met-1.

Its function is as follows. Rubredoxin is a small nonheme, iron protein lacking acid-labile sulfide. Its single Fe, chelated to 4 Cys, functions as an electron acceptor and may also stabilize the conformation of the molecule. The sequence is that of Rubredoxin from Heliobacterium mobile (Heliobacillus mobilis).